Reading from the N-terminus, the 261-residue chain is Snake venom serine protease (261 aa).

The first 20 residues, methionine 1–threonine 20, serve as a signal peptide directing secretion. Positions alanine 21–arginine 24 are excised as a propeptide. Residues isoleucine 25 to alanine 249 form the Peptidase S1 domain. 6 disulfides stabilise this stretch: cysteine 31-cysteine 163, cysteine 50-cysteine 66, cysteine 98-cysteine 256, cysteine 142-cysteine 210, cysteine 174-cysteine 189, and cysteine 200-cysteine 225. Catalysis depends on histidine 65, which acts as the Charge relay system. Asparagine 103 carries N-linked (GlcNAc...) asparagine glycosylation. Aspartate 110 serves as the catalytic Charge relay system. N-linked (GlcNAc...) asparagine glycans are attached at residues asparagine 117 and asparagine 121. The Charge relay system role is filled by serine 204.

This sequence belongs to the peptidase S1 family. Snake venom subfamily. In terms of assembly, monomer. In terms of tissue distribution, expressed by the venom gland.

It is found in the secreted. Functionally, snake venom serine protease that may act in the hemostasis system of the prey. The chain is Snake venom serine protease from Philodryas olfersii (Green snake).